Here is a 130-residue protein sequence, read N- to C-terminus: Holo-[acyl-carrier-protein] synthase (130 aa).

Mg(2+)-binding residues include aspartate 8 and glutamate 62.

It belongs to the P-Pant transferase superfamily. AcpS family. It depends on Mg(2+) as a cofactor.

The protein localises to the cytoplasm. It carries out the reaction apo-[ACP] + CoA = holo-[ACP] + adenosine 3',5'-bisphosphate + H(+). Transfers the 4'-phosphopantetheine moiety from coenzyme A to a Ser of acyl-carrier-protein. The sequence is that of Holo-[acyl-carrier-protein] synthase from Variovorax paradoxus (strain S110).